The following is a 466-amino-acid chain: Adenosylhomocysteinase (466 aa).

Substrate-binding residues include threonine 57, aspartate 132, and glutamate 192. Threonine 193 to threonine 195 provides a ligand contact to NAD(+). Substrate contacts are provided by lysine 222 and aspartate 226. NAD(+) is bound by residues asparagine 227, glycine 256–glycine 261, glutamate 279, asparagine 314, isoleucine 335–histidine 337, and asparagine 380.

The protein belongs to the adenosylhomocysteinase family. NAD(+) is required as a cofactor.

The protein resides in the cytoplasm. It catalyses the reaction S-adenosyl-L-homocysteine + H2O = L-homocysteine + adenosine. It participates in amino-acid biosynthesis; L-homocysteine biosynthesis; L-homocysteine from S-adenosyl-L-homocysteine: step 1/1. May play a key role in the regulation of the intracellular concentration of adenosylhomocysteine. The sequence is that of Adenosylhomocysteinase from Mesorhizobium japonicum (strain LMG 29417 / CECT 9101 / MAFF 303099) (Mesorhizobium loti (strain MAFF 303099)).